We begin with the raw amino-acid sequence, 557 residues long: Formate--tetrahydrofolate ligase 2 (557 aa).

ATP is bound at residue T66–T73.

It belongs to the formate--tetrahydrofolate ligase family.

It carries out the reaction (6S)-5,6,7,8-tetrahydrofolate + formate + ATP = (6R)-10-formyltetrahydrofolate + ADP + phosphate. It participates in one-carbon metabolism; tetrahydrofolate interconversion. This is Formate--tetrahydrofolate ligase 2 from Streptococcus pyogenes serotype M1.